The following is a 392-amino-acid chain: NADH-quinone oxidoreductase subunit D (392 aa).

It belongs to the complex I 49 kDa subunit family. NDH-1 is composed of 14 different subunits. Subunits NuoB, C, D, E, F, and G constitute the peripheral sector of the complex.

Its subcellular location is the cell inner membrane. The enzyme catalyses a quinone + NADH + 5 H(+)(in) = a quinol + NAD(+) + 4 H(+)(out). Functionally, NDH-1 shuttles electrons from NADH, via FMN and iron-sulfur (Fe-S) centers, to quinones in the respiratory chain. The immediate electron acceptor for the enzyme in this species is believed to be ubiquinone. Couples the redox reaction to proton translocation (for every two electrons transferred, four hydrogen ions are translocated across the cytoplasmic membrane), and thus conserves the redox energy in a proton gradient. This chain is NADH-quinone oxidoreductase subunit D, found in Rhodospirillum rubrum (strain ATCC 11170 / ATH 1.1.1 / DSM 467 / LMG 4362 / NCIMB 8255 / S1).